Here is a 67-residue protein sequence, read N- to C-terminus: MKPSEMRNLQATDFAKEIDARKKELMELRFQAAAGQLAQPHRVRQLRREVAQLNTVKAELARKGEQQ.

It belongs to the universal ribosomal protein uL29 family. Part of the 50S ribosomal subunit. Contacts protein L23 and trigger factor when it is complexed with the ribosome.

Functionally, binds the 23S rRNA. One of the proteins that surrounds the polypeptide exit tunnel on the outside of the subunit. The chain is Large ribosomal subunit protein uL29 (rpmC) from Deinococcus radiodurans (strain ATCC 13939 / DSM 20539 / JCM 16871 / CCUG 27074 / LMG 4051 / NBRC 15346 / NCIMB 9279 / VKM B-1422 / R1).